Reading from the N-terminus, the 142-residue chain is MMSFVSLLLVGILFHATQAEQLTKCEVFRELKDLKDYGGVSLPEWVCTAFHTSGYDTQAIVQNNDSTEYGLFQINNKIWCKDDQNPHSSNICNISCDKFLDDDLTDDIMCVKKILDKVGINYWLAHKALCSEKLDQWLCEKL.

A signal peptide spans 1–18 (MMSFVSLLLVGILFHATQ). One can recognise a C-type lysozyme domain in the interval 20–142 (EQLTKCEVFR…KLDQWLCEKL (123 aa)). 4 cysteine pairs are disulfide-bonded: C25–C139, C47–C130, C80–C96, and C92–C110. N-linked (GlcNAc...) asparagine glycans are attached at residues N64 and N93. Ca(2+) contacts are provided by K98, D101, D103, D106, and D107.

The protein belongs to the glycosyl hydrolase 22 family. In terms of assembly, lactose synthase (LS) is a heterodimer of a catalytic component, beta1,4-galactosyltransferase (beta4Gal-T1) and a regulatory component, alpha-lactalbumin (LA). Mammary gland specific. Secreted in milk.

The protein resides in the secreted. Functionally, regulatory subunit of lactose synthase, changes the substrate specificity of galactosyltransferase in the mammary gland making glucose a good acceptor substrate for this enzyme. This enables LS to synthesize lactose, the major carbohydrate component of milk. In other tissues, galactosyltransferase transfers galactose onto the N-acetylglucosamine of the oligosaccharide chains in glycoproteins. This is Alpha-lactalbumin (LALBA) from Bubalus bubalis (Domestic water buffalo).